Reading from the N-terminus, the 517-residue chain is FAD-dependent monooxygenase FUP4 (517 aa).

Positions 1-19 (MRQSSTLTWTSVLLAPLAA) are cleaved as a signal peptide. One can recognise an FAD-binding PCMH-type domain in the interval 75–246 (QALRPACLVH…TRFDLDLYDQ (172 aa)). His112 is subject to Pros-8alpha-FAD histidine. Residues Asn163, Asn208, and Asn346 are each glycosylated (N-linked (GlcNAc...) asparagine).

It belongs to the oxygen-dependent FAD-linked oxidoreductase family. FAD serves as cofactor.

It participates in secondary metabolite biosynthesis; terpenoid biosynthesis. Functionally, FAD-dependent monooxygenase; part of the gene cluster that mediates the biosynthesis of the mycotoxin fusaproliferin (FUP) that belongs to the class of bicyclic sesterterpenoids. FUP4 catalyzes the oxidation of the hydroxy group at the C-16 position of preterpestacin III to a keto group, leading to the formation of (-)-terpestacin. The product of FUP1, preterpestacin I, might also serve as a substrate of FUP4 to yield oxo-preterpestacin I. The FUP biosynthetic pathway starts with the enzyme encoded by FUP1 that combines a C-terminal prenyltransferase domain responsible for the synthesis of geranylgeranyl diphosphate with the N-terminal terpene cyclase domain, to yield preterpestacin I. Preterpestacin I is then decorated by oxygenation steps that are catalyzed by two cytochrome P450 monooxygenases. First, FUP2 introduces a hydroxyl group at the C-24 position resulting in the formation of preterpestacin IIa. The second P450 monooxygenase catalyzes the hydroxylation at C-16 and C-17 of preterpestacin IIa, producing preterpestacin III. Subsequently, the FAD-dependent oxidoreductase FUP4 catalyzes the oxidation of the hydroxy group at the C-16 position to a keto group, leading to the formation of (-)-terpestacin, which is the immediate precursor of FUP. The final step in the proposed biosynthetic pathway is the addition of an acetyl group at the C-24 position of terpestacin, which is catalyzed by the acetyltransferase FUP5. The sequence is that of FAD-dependent monooxygenase FUP4 from Fusarium proliferatum (strain ET1) (Orchid endophyte fungus).